The following is a 120-amino-acid chain: uncharacterized protein (120 aa).

A signal peptide spans 1–18 (MRSWIPLLVLFAVLAVFA). Positions 20–99 (AGKSSESDES…GDNRVKRDGL (80 aa)) are disordered.

This is an uncharacterized protein from Caenorhabditis elegans.